Consider the following 508-residue polypeptide: Maturase K (508 aa).

This sequence belongs to the intron maturase 2 family. MatK subfamily.

It is found in the plastid. The protein resides in the chloroplast. Functionally, usually encoded in the trnK tRNA gene intron. Probably assists in splicing its own and other chloroplast group II introns. This is Maturase K from Ranunculus lingua (Greater spearwort).